Reading from the N-terminus, the 20-residue chain is SNPNFILTLVNNVPYTIWPA.

Its subcellular location is the secreted. It is found in the cell wall. The protein is 23 kDa cell wall protein of Solanum lycopersicum (Tomato).